The primary structure comprises 175 residues: MSDLEGLHLYNHSDEELFSIHDSVFQEHTGGEGRMSSSSGEEGCGQTLLPVHEKKSTYGLFNPLTGVGWRAYLEERLEAELGRATASEQDLTLMIVQVEHPAHQTAVADAAKKLVEFFKFRDMLFEFEGSCCFAGIVQDASLEERWYSRGIYTRSCAAPLRAHASLSASRRVRPD.

This is an uncharacterized protein from Treponema pallidum (strain Nichols).